Consider the following 89-residue polypeptide: Probable Fe(2+)-trafficking protein (89 aa).

This sequence belongs to the Fe(2+)-trafficking protein family.

In terms of biological role, could be a mediator in iron transactions between iron acquisition and iron-requiring processes, such as synthesis and/or repair of Fe-S clusters in biosynthetic enzymes. The chain is Probable Fe(2+)-trafficking protein from Acinetobacter baumannii (strain AB0057).